The sequence spans 155 residues: 6,7-dimethyl-8-ribityllumazine synthase (155 aa).

Residues Phe24, 58–60 (AFE), and 82–84 (AII) contribute to the 5-amino-6-(D-ribitylamino)uracil site. 87–88 (AT) is a binding site for (2S)-2-hydroxy-3-oxobutyl phosphate. The Proton donor role is filled by His90. Phe115 provides a ligand contact to 5-amino-6-(D-ribitylamino)uracil. Arg129 serves as a coordination point for (2S)-2-hydroxy-3-oxobutyl phosphate.

The protein belongs to the DMRL synthase family.

It catalyses the reaction (2S)-2-hydroxy-3-oxobutyl phosphate + 5-amino-6-(D-ribitylamino)uracil = 6,7-dimethyl-8-(1-D-ribityl)lumazine + phosphate + 2 H2O + H(+). It functions in the pathway cofactor biosynthesis; riboflavin biosynthesis; riboflavin from 2-hydroxy-3-oxobutyl phosphate and 5-amino-6-(D-ribitylamino)uracil: step 1/2. Catalyzes the formation of 6,7-dimethyl-8-ribityllumazine by condensation of 5-amino-6-(D-ribitylamino)uracil with 3,4-dihydroxy-2-butanone 4-phosphate. This is the penultimate step in the biosynthesis of riboflavin. This is 6,7-dimethyl-8-ribityllumazine synthase from Prosthecochloris aestuarii (strain DSM 271 / SK 413).